A 407-amino-acid chain; its full sequence is Na(+)-translocating NADH-quinone reductase subunit F (407 aa).

Residues 3-23 traverse the membrane as a helical segment; sequence IILGVVMFTLIVLVLSGLILA. Residues 32-126 enclose the 2Fe-2S ferredoxin-type domain; it reads GDVVIEINNE…NMKIELPEEI (95 aa). Residues Cys-69, Cys-75, Cys-78, and Cys-110 each coordinate [2Fe-2S] cluster. Positions 129 to 269 constitute an FAD-binding FR-type domain; that stretch reads VKKWECEVIS…SGPFGEFFAK (141 aa).

This sequence belongs to the NqrF family. In terms of assembly, composed of six subunits; NqrA, NqrB, NqrC, NqrD, NqrE and NqrF. It depends on [2Fe-2S] cluster as a cofactor. The cofactor is FAD.

The protein localises to the cell inner membrane. It carries out the reaction a ubiquinone + n Na(+)(in) + NADH + H(+) = a ubiquinol + n Na(+)(out) + NAD(+). Functionally, NQR complex catalyzes the reduction of ubiquinone-1 to ubiquinol by two successive reactions, coupled with the transport of Na(+) ions from the cytoplasm to the periplasm. The first step is catalyzed by NqrF, which accepts electrons from NADH and reduces ubiquinone-1 to ubisemiquinone by a one-electron transfer pathway. In Klebsiella pneumoniae subsp. pneumoniae (strain ATCC 700721 / MGH 78578), this protein is Na(+)-translocating NADH-quinone reductase subunit F.